The primary structure comprises 906 residues: Protein translocase subunit SecA (906 aa).

Residues glutamine 87, 105–109 (GEGKT), and aspartate 513 each bind ATP. A disordered region spans residues 860-906 (QVNKGEVVSDENTGDDTFVRNEKKVGRNEPCPCGSGKKYKQCHGKLD). Over residues 876–886 (TFVRNEKKVGR) the composition is skewed to basic and acidic residues. 4 residues coordinate Zn(2+): cysteine 890, cysteine 892, cysteine 901, and histidine 902. The segment covering 896 to 906 (KKYKQCHGKLD) has biased composition (basic residues).

The protein belongs to the SecA family. In terms of assembly, monomer and homodimer. Part of the essential Sec protein translocation apparatus which comprises SecA, SecYEG and auxiliary proteins SecDF-YajC and YidC. The cofactor is Zn(2+).

It is found in the cell inner membrane. The protein localises to the cytoplasm. The enzyme catalyses ATP + H2O + cellular proteinSide 1 = ADP + phosphate + cellular proteinSide 2.. In terms of biological role, part of the Sec protein translocase complex. Interacts with the SecYEG preprotein conducting channel. Has a central role in coupling the hydrolysis of ATP to the transfer of proteins into and across the cell membrane, serving both as a receptor for the preprotein-SecB complex and as an ATP-driven molecular motor driving the stepwise translocation of polypeptide chains across the membrane. This chain is Protein translocase subunit SecA, found in Psychromonas ingrahamii (strain DSM 17664 / CCUG 51855 / 37).